A 1282-amino-acid polypeptide reads, in one-letter code: Cytokine receptor (1282 aa).

Positions 1–23 are cleaved as a signal peptide; it reads MVAQEQLVLLLMLLAGCRGGANA. At 24 to 889 the chain is on the extracellular side; it reads ILDPGWVIPS…CTPDTHSVKA (866 aa). Residues N44, N86, N87, and N114 are each glycosylated (N-linked (GlcNAc...) asparagine). A disulfide bridge connects residues C47 and C106. 7 Fibronectin type-III domains span residues 124 to 220, 227 to 327, 329 to 431, 436 to 535, 537 to 631, 635 to 735, and 736 to 836; these read PLLV…NHFE, PGQN…TAPA, PRRP…SNRD, EPRN…KKDD, AKME…TGEA, QPRE…TAIG, and VPSP…LMST. Residues C132 and C142 are joined by a disulfide bond. N-linked (GlcNAc...) asparagine glycans are attached at residues N143 and N156. An intrachain disulfide couples C173 to C183. Residues N184, N230, N235, N278, N298, N310, N376, N448, and N466 are each glycosylated (N-linked (GlcNAc...) asparagine). C472 and C482 form a disulfide bridge. N-linked (GlcNAc...) asparagine glycans are attached at residues N568, N581, N626, N676, N703, N777, N790, and N862. Residues 890–910 form a helical membrane-spanning segment; that stretch reads MYQTIEVTVAILVLGVIFYLV. The Cytoplasmic segment spans residues 911–1282; sequence YKKYRKMSDI…NAMAHNRHVL (372 aa). A Phosphoserine modification is found at S976. Disordered regions lie at residues 989-1092 and 1238-1258; these read TASS…HTFS and TVGSPTHAAGGAPGGGNQHSR. Composition is skewed to basic and acidic residues over residues 999 to 1009 and 1033 to 1064; these read VDRDGYDDNHE and NDRERERERDREQEREREQQQQQRESEMDREQ.

Belongs to the type I cytokine receptor family. Interacts with wdp; the interaction promotes internalization of dome and its subsequent lysosomal degradation; thereby reducing JAK/STAT signaling. In terms of processing, undergoes lysosomal degradation. As to expression, in stage 11 embryos, tracheal pits show highest expression, at stage 14 high expression is detected in the posterior spiracles, gut and head.

It localises to the apicolateral cell membrane. In terms of biological role, critical for epithelial morphogenesis during oogenesis; border cell migration. Required in the germarium for the polarization of follicle cells during encapsulation of germline cells. Required for embryonic segmentation and trachea specification. Essential receptor molecule for upd and JAK/STAT signaling during oogenesis. The chain is Cytokine receptor (dome) from Drosophila melanogaster (Fruit fly).